The primary structure comprises 812 residues: Leucine-rich repeat-containing protein 41 (812 aa).

The interval 45-54 is interaction with Elongin BC complex; sequence ALFELCGRAV. Ser155, Ser276, and Ser326 each carry phosphoserine. Residues 267–408 form a disordered region; that stretch reads GEASRGRAPS…GARTRQGPGA (142 aa). Thr327 bears the Phosphothreonine mark. Residues 354–381 show a composition bias toward low complexity; the sequence is TKRSPSAPAATSSASSSTSSYKRAPASS. Phosphoserine occurs at positions 357 and 373. Basic residues predominate over residues 387 to 401; the sequence is PLKRFKRAAGKKGAR. LRR repeat units lie at residues 487–507, 518–530, 531–555, 613–635, 636–659, 701–728, and 731–752; these read WVSL…IFRL, AGCR…LSDL, FSPL…VLSI, SGSL…FGLV, LQTL…LADC, NSTL…VFSE, and SSSL…LLEF.

As to quaternary structure, part of an E3 ubiquitin-protein ligase complex with Elongin BC (ELOB and ELOC), RBX1 and CUL5. Component of a probable ECS(LRRC41) complex which contains CUL5, RNF7/RBX2, Elongin BC and LRRC41. Interacts with CUL5, RNF7, ELOB and ELOC.

It participates in protein modification; protein ubiquitination. In terms of biological role, probable substrate recognition component of an ECS (Elongin BC-CUL2/5-SOCS-box protein) E3 ubiquitin ligase complex which mediates the ubiquitination and subsequent proteasomal degradation of target proteins. This chain is Leucine-rich repeat-containing protein 41 (LRRC41), found in Homo sapiens (Human).